A 572-amino-acid polypeptide reads, in one-letter code: Proline--tRNA ligase (572 aa).

Belongs to the class-II aminoacyl-tRNA synthetase family. ProS type 1 subfamily. Homodimer.

It localises to the cytoplasm. The catalysed reaction is tRNA(Pro) + L-proline + ATP = L-prolyl-tRNA(Pro) + AMP + diphosphate. In terms of biological role, catalyzes the attachment of proline to tRNA(Pro) in a two-step reaction: proline is first activated by ATP to form Pro-AMP and then transferred to the acceptor end of tRNA(Pro). As ProRS can inadvertently accommodate and process non-cognate amino acids such as alanine and cysteine, to avoid such errors it has two additional distinct editing activities against alanine. One activity is designated as 'pretransfer' editing and involves the tRNA(Pro)-independent hydrolysis of activated Ala-AMP. The other activity is designated 'posttransfer' editing and involves deacylation of mischarged Ala-tRNA(Pro). The misacylated Cys-tRNA(Pro) is not edited by ProRS. The polypeptide is Proline--tRNA ligase (Salmonella arizonae (strain ATCC BAA-731 / CDC346-86 / RSK2980)).